Reading from the N-terminus, the 367-residue chain is MEKYIGLMSGTSLDGVDAVIVETNGTTINLLGHADYPMDPQLKADLLAVCTGQQTNLKVIGEIDHRLGHLFAEATLHLLSTLNIASSDITAIGSHGQTVFHSPDAEYPFTMQLGDSNIIAAKTGIDTVADFRRKDMALGGQGAPLVPAFHNTLFGKPESTNVILNIGGISNISILQKDSPVIGYDTGPGNMLMDSWITEHKGESYDKDGAWARSGQIIDELLNQLKTHDYFARPYPKSTGRELFNLDWFAQYIENKPYQPQDVQATLLEFTVTTIVDQVIRFQVGNDTKLLVCGGGAHNQFLMERLQYHLPNWAVSTTNDYNVDSDNMEAMAFAWLAHQRIHGLPSNEPDVTGASRYASLGVIYPAN.

10–17 (GTSLDGVD) contributes to the ATP binding site.

It belongs to the anhydro-N-acetylmuramic acid kinase family.

The catalysed reaction is 1,6-anhydro-N-acetyl-beta-muramate + ATP + H2O = N-acetyl-D-muramate 6-phosphate + ADP + H(+). Its pathway is amino-sugar metabolism; 1,6-anhydro-N-acetylmuramate degradation. The protein operates within cell wall biogenesis; peptidoglycan recycling. Functionally, catalyzes the specific phosphorylation of 1,6-anhydro-N-acetylmuramic acid (anhMurNAc) with the simultaneous cleavage of the 1,6-anhydro ring, generating MurNAc-6-P. Is required for the utilization of anhMurNAc either imported from the medium or derived from its own cell wall murein, and thus plays a role in cell wall recycling. The sequence is that of Anhydro-N-acetylmuramic acid kinase from Aliivibrio fischeri (strain ATCC 700601 / ES114) (Vibrio fischeri).